A 469-amino-acid polypeptide reads, in one-letter code: Neuraminidase (469 aa).

Residues 1–6 lie on the Intravirion side of the membrane; it reads MNPNQK. Residues 7–27 form a helical membrane-spanning segment; that stretch reads IITIGSICMVVGIISLILQIG. Residues 11–33 form an involved in apical transport and lipid raft association region; the sequence is GSICMVVGIISLILQIGNIVSIW. Residues 28-469 are Virion surface-facing; that stretch reads NIVSIWISHS…GAELPFTIDK (442 aa). Residues 36 to 90 are hypervariable stalk region; sequence HSIQTGNQNHTGTCNQSIITYKNSTWVNQTYVNISNTNVVAGKDTTSVILAGNSS. N44, N50, N58, N63, N68, and N88 each carry an N-linked (GlcNAc...) asparagine; by host glycan. A head of neuraminidase region spans residues 91 to 469; it reads LCPIRGWAIY…GAELPFTIDK (379 aa). 8 disulfides stabilise this stretch: C92-C417, C124-C129, C184-C231, C233-C238, C279-C292, C281-C290, C318-C335, and C421-C446. A substrate-binding site is contributed by R118. A glycan (N-linked (GlcNAc...) asparagine; by host) is linked at N146. D151 acts as the Proton donor/acceptor in catalysis. R152 contacts substrate. N235 is a glycosylation site (N-linked (GlcNAc...) asparagine; by host). 277–278 serves as a coordination point for substrate; sequence EE. Residue R293 participates in substrate binding. The Ca(2+) site is built by D294, G298, D324, and N344. N365 is a glycosylation site (N-linked (GlcNAc...) asparagine; by host). R368 is a substrate binding site. Y402 functions as the Nucleophile in the catalytic mechanism.

Belongs to the glycosyl hydrolase 34 family. In terms of assembly, homotetramer. Requires Ca(2+) as cofactor. In terms of processing, N-glycosylated.

Its subcellular location is the virion membrane. It is found in the host apical cell membrane. The catalysed reaction is Hydrolysis of alpha-(2-&gt;3)-, alpha-(2-&gt;6)-, alpha-(2-&gt;8)- glycosidic linkages of terminal sialic acid residues in oligosaccharides, glycoproteins, glycolipids, colominic acid and synthetic substrates.. With respect to regulation, inhibited by the neuraminidase inhibitors zanamivir (Relenza) and oseltamivir (Tamiflu). These drugs interfere with the release of progeny virus from infected cells and are effective against all influenza strains. Resistance to neuraminidase inhibitors is quite rare. Its function is as follows. Catalyzes the removal of terminal sialic acid residues from viral and cellular glycoconjugates. Cleaves off the terminal sialic acids on the glycosylated HA during virus budding to facilitate virus release. Additionally helps virus spread through the circulation by further removing sialic acids from the cell surface. These cleavages prevent self-aggregation and ensure the efficient spread of the progeny virus from cell to cell. Otherwise, infection would be limited to one round of replication. Described as a receptor-destroying enzyme because it cleaves a terminal sialic acid from the cellular receptors. May facilitate viral invasion of the upper airways by cleaving the sialic acid moieties on the mucin of the airway epithelial cells. Likely to plays a role in the budding process through its association with lipid rafts during intracellular transport. May additionally display a raft-association independent effect on budding. Plays a role in the determination of host range restriction on replication and virulence. Sialidase activity in late endosome/lysosome traffic seems to enhance virus replication. This Aves (Human) protein is Neuraminidase.